A 278-amino-acid polypeptide reads, in one-letter code: Sulfur carrier protein FdhD (278 aa).

The Cysteine persulfide intermediate role is filled by Cys121. Position 260 to 265 (Phe260 to Arg265) interacts with Mo-bis(molybdopterin guanine dinucleotide).

Belongs to the FdhD family.

The protein localises to the cytoplasm. Functionally, required for formate dehydrogenase (FDH) activity. Acts as a sulfur carrier protein that transfers sulfur from IscS to the molybdenum cofactor prior to its insertion into FDH. This Escherichia coli O127:H6 (strain E2348/69 / EPEC) protein is Sulfur carrier protein FdhD.